Consider the following 283-residue polypeptide: Phosphatidylglycerol--prolipoprotein diacylglyceryl transferase (283 aa).

The next 3 helical transmembrane spans lie at 14-34, 56-76, and 88-108; these read LGPL…ALFL, MLMY…VLFY, and IFMV…VLIA. Arg139 provides a ligand contact to a 1,2-diacyl-sn-glycero-3-phospho-(1'-sn-glycerol). Residues 258-278 form a helical membrane-spanning segment; it reads MGQWLSLPMIVIGVALLVFFG.

This sequence belongs to the Lgt family.

It localises to the cell inner membrane. The catalysed reaction is L-cysteinyl-[prolipoprotein] + a 1,2-diacyl-sn-glycero-3-phospho-(1'-sn-glycerol) = an S-1,2-diacyl-sn-glyceryl-L-cysteinyl-[prolipoprotein] + sn-glycerol 1-phosphate + H(+). It functions in the pathway protein modification; lipoprotein biosynthesis (diacylglyceryl transfer). Its function is as follows. Catalyzes the transfer of the diacylglyceryl group from phosphatidylglycerol to the sulfhydryl group of the N-terminal cysteine of a prolipoprotein, the first step in the formation of mature lipoproteins. This Chromobacterium violaceum (strain ATCC 12472 / DSM 30191 / JCM 1249 / CCUG 213 / NBRC 12614 / NCIMB 9131 / NCTC 9757 / MK) protein is Phosphatidylglycerol--prolipoprotein diacylglyceryl transferase.